Reading from the N-terminus, the 128-residue chain is Aspartate 1-decarboxylase (128 aa).

The active-site Schiff-base intermediate with substrate; via pyruvic acid is Ser25. At Ser25 the chain carries Pyruvic acid (Ser). Position 57 (Thr57) interacts with substrate. The Proton donor role is filled by Tyr58. 73-75 (GSA) is a binding site for substrate.

The protein belongs to the PanD family. As to quaternary structure, heterooctamer of four alpha and four beta subunits. The cofactor is pyruvate. Is synthesized initially as an inactive proenzyme, which is activated by self-cleavage at a specific serine bond to produce a beta-subunit with a hydroxyl group at its C-terminus and an alpha-subunit with a pyruvoyl group at its N-terminus.

The protein resides in the cytoplasm. The catalysed reaction is L-aspartate + H(+) = beta-alanine + CO2. Its pathway is cofactor biosynthesis; (R)-pantothenate biosynthesis; beta-alanine from L-aspartate: step 1/1. Its function is as follows. Catalyzes the pyruvoyl-dependent decarboxylation of aspartate to produce beta-alanine. The chain is Aspartate 1-decarboxylase from Paraburkholderia phytofirmans (strain DSM 17436 / LMG 22146 / PsJN) (Burkholderia phytofirmans).